The following is a 104-amino-acid chain: Glutaredoxin-C15 (104 aa).

The Glutaredoxin domain occupies 1–103; sequence MERVAKLSTE…PMLKAAGAIW (103 aa). A disulfide bridge links cysteine 21 with cysteine 24.

It belongs to the glutaredoxin family. CC-type subfamily.

The protein resides in the cytoplasm. Its function is as follows. Has a glutathione-disulfide oxidoreductase activity in the presence of NADPH and glutathione reductase. Reduces low molecular weight disulfides and proteins. This Oryza sativa subsp. japonica (Rice) protein is Glutaredoxin-C15 (GRXC15).